A 672-amino-acid chain; its full sequence is Leucine-rich repeat receptor-like protein kinase PXC1 (672 aa).

The N-terminal stretch at 1–21 (MAAKPLLLPLLLLLHLSITLA) is a signal peptide. Topologically, residues 22–269 (QNDTNALTLF…IHSHRGIKPG (248 aa)) are extracellular. 3 N-linked (GlcNAc...) asparagine glycosylation sites follow: Asn-23, Asn-44, and Asn-101. Residues 87 to 110 (LDQLRLLDLHDNRLNGTVSPLTNC) form an LRR 1 repeat. Lys-111 participates in a covalent cross-link: Glycyl lysine isopeptide (Lys-Gly) (interchain with G-Cter in ubiquitin). LRR repeat units follow at residues 112 to 134 (NLRLVYLAGNDLSGEIPKEISFL), 135 to 158 (KRMIRLDLSDNNIRGVIPREILGF), 160 to 181 (RVLTIRIQNNELTGRIPDFSQM), and 182 to 205 (KSLLELNVSFNELHGNVSDGVVKK). Residues Asn-188 and Asn-197 are each glycosylated (N-linked (GlcNAc...) asparagine). Positions 233-249 (ESSNTDQIVPSNPTSIP) are enriched in polar residues. The segment at 233–254 (ESSNTDQIVPSNPTSIPHSPVS) is disordered. The chain crosses the membrane as a helical span at residues 270–290 (IIAAVIGGCVAVIVLVSFGFA). At 291 to 672 (FCCGRLDRNG…MSPSLATTDG (382 aa)) the chain is on the cytoplasmic side. The disordered stretch occupies residues 300–333 (GERSKSGSVETGFVGGGEGKRRSSYGEGGESDAT). One can recognise a Protein kinase domain in the interval 357 to 645 (KASAEMLGKG…AEVVKMVEEI (289 aa)). ATP contacts are provided by residues 363–371 (LGKGSLGTV) and Lys-386. A disordered region spans residues 650–672 (SPVGEDFDESRNSMSPSLATTDG). Polar residues predominate over residues 661 to 672 (NSMSPSLATTDG).

This sequence belongs to the protein kinase superfamily. Ser/Thr protein kinase family. In terms of tissue distribution, expressed in the vascular strands of cotyledons, the shoot apex, hypocotyls, roots, leaves, stems and flowers.

Its subcellular location is the cell membrane. Its function is as follows. Leucine-rich repeat receptor-like protein kinase involved in secondary cell wall formation in xylem fibers. May play a role in a regulatory network which also incorporates the TDR/PXY signaling pathway and regulates the maturation of interfascicular fiber cells. May promote the initiation of secondary cell wall deposition during the procedure of cell expansion. The chain is Leucine-rich repeat receptor-like protein kinase PXC1 from Arabidopsis thaliana (Mouse-ear cress).